Reading from the N-terminus, the 132-residue chain is uncharacterized protein (132 aa).

Residues 105-125 (VHGYVVFWLSILCILIIIFVY) traverse the membrane as a helical segment.

Its subcellular location is the membrane. This is an uncharacterized protein from Methanocaldococcus jannaschii (strain ATCC 43067 / DSM 2661 / JAL-1 / JCM 10045 / NBRC 100440) (Methanococcus jannaschii).